Here is a 381-residue protein sequence, read N- to C-terminus: E3 ubiquitin-protein ligase At1g63170 (381 aa).

The interval 1–23 (MSRETTTEATPLILTDGGGGRRS) is disordered. 2 consecutive transmembrane segments (helical) span residues 74–94 (VVVL…AVLV) and 107–127 (VWII…CVEY). The tract at residues 135 to 161 (RRDLSPRSSSSSSSSSSSMDEEEGLGL) is disordered. Residues 140-152 (PRSSSSSSSSSSS) show a composition bias toward low complexity. Positions 170–194 (LELGQLENENNSFAKHLESANTMIS) form a coiled coil. 3 helical membrane passes run 189-209 (ANTM…SSGG), 224-244 (IVFL…ACVI), and 245-265 (GIAV…VAEQ). The RING-type; atypical zinc-finger motif lies at 325-366 (CCICLSAYEDETELRELPCGHHFHCGCVDKWLYINATCPLCK).

It localises to the membrane. It catalyses the reaction S-ubiquitinyl-[E2 ubiquitin-conjugating enzyme]-L-cysteine + [acceptor protein]-L-lysine = [E2 ubiquitin-conjugating enzyme]-L-cysteine + N(6)-ubiquitinyl-[acceptor protein]-L-lysine.. It participates in protein modification; protein ubiquitination. Functionally, mediates E2-dependent protein ubiquitination. The polypeptide is E3 ubiquitin-protein ligase At1g63170 (Arabidopsis thaliana (Mouse-ear cress)).